The following is a 523-amino-acid chain: 11-oxo-beta-amyrin 30-oxidase (523 aa).

Residues 9–29 traverse the membrane as a helical segment; it reads AIWVVLTVILAAIPIWVCHMV. Cys-471 contacts heme.

This sequence belongs to the cytochrome P450 family. It depends on heme as a cofactor. Expressed in roots, stolons and stems. Not detected in leaves.

It localises to the membrane. The catalysed reaction is 11-oxo-beta-amyrin + 3 reduced [NADPH--hemoprotein reductase] + 3 O2 = glycyrrhetinate + 3 oxidized [NADPH--hemoprotein reductase] + 4 H2O + 4 H(+). It catalyses the reaction 11-oxo-beta-amyrin + reduced [NADPH--hemoprotein reductase] + O2 = 30-hydroxy-11-oxo-beta-amyrin + oxidized [NADPH--hemoprotein reductase] + H2O + H(+). The enzyme catalyses 30-hydroxy-11-oxo-beta-amyrin + reduced [NADPH--hemoprotein reductase] + O2 = glycyrrhetaldehyde + oxidized [NADPH--hemoprotein reductase] + 2 H2O + H(+). It carries out the reaction glycyrrhetaldehyde + reduced [NADPH--hemoprotein reductase] + O2 = glycyrrhetinate + oxidized [NADPH--hemoprotein reductase] + H2O + 2 H(+). Involved in the biosynthesis of Glycyrrhetinic acid (GA), a natural product which exhibits anti-inflammatory activity. Involved in the biosynthesis of the triterpenoid saponin glycyrrhizin. Catalyzes three sequential oxidation steps at C-30 of 11-oxo-beta-amyrin. Also able to catalyze C-30 monohydroxylation of beta-amyrin to produce 30-hydroxy-beta-amyrin. May be also responsible for the oxidation at positions C-22 and C-29 in addition to C-30. In Glycyrrhiza uralensis (Chinese licorice), this protein is 11-oxo-beta-amyrin 30-oxidase.